The sequence spans 259 residues: MERKINRREKEKEYEGKHNSLEDTDQGKNCKSTLMTLNVGGYLYITQKQTLTKYPDTFLEGIVNGKILCPFDADGHYFIDRDGLLFRHVLNFLRNGELLLPEGFRENQLLAQEAEFFQLKGLAEEVKSRWEKEQLTPRETTFLEITDNHDRSQGLRIFCNAPDFISKIKSRIVLVSKSRLDGFPEEFSISSNIIQFKYFIKSENGTRLVLKEDNTFVCTLETLKFEAIMMALKCGFRLLTSLDCSKGSIVHSDALHFIK.

Residues M1–D25 form a disordered region. The BTB domain occupies T33–Q134.

In Homo sapiens (Human), this protein is BTB/POZ domain-containing protein KCTD4 (KCTD4).